Consider the following 396-residue polypeptide: Putative nickel insertion protein (396 aa).

This sequence belongs to the LarC family.

The protein is Putative nickel insertion protein of Methanosarcina mazei (strain ATCC BAA-159 / DSM 3647 / Goe1 / Go1 / JCM 11833 / OCM 88) (Methanosarcina frisia).